Here is a 552-residue protein sequence, read N- to C-terminus: Hydroxylamine reductase (552 aa).

Positions 5, 8, 20, and 27 each coordinate [2Fe-2S] cluster. Hybrid [4Fe-2O-2S] cluster contacts are provided by H251, E275, C319, C407, C435, C460, E494, and K496. A Cysteine persulfide modification is found at C407.

Belongs to the HCP family. [2Fe-2S] cluster serves as cofactor. It depends on hybrid [4Fe-2O-2S] cluster as a cofactor.

Its subcellular location is the cytoplasm. It catalyses the reaction A + NH4(+) + H2O = hydroxylamine + AH2 + H(+). In terms of biological role, catalyzes the reduction of hydroxylamine to form NH(3) and H(2)O. This Escherichia coli (strain UTI89 / UPEC) protein is Hydroxylamine reductase.